The primary structure comprises 185 residues: Elongation factor P (185 aa).

This sequence belongs to the elongation factor P family.

It localises to the cytoplasm. The protein operates within protein biosynthesis; polypeptide chain elongation. In terms of biological role, involved in peptide bond synthesis. Stimulates efficient translation and peptide-bond synthesis on native or reconstituted 70S ribosomes in vitro. Probably functions indirectly by altering the affinity of the ribosome for aminoacyl-tRNA, thus increasing their reactivity as acceptors for peptidyl transferase. The chain is Elongation factor P from Burkholderia lata (strain ATCC 17760 / DSM 23089 / LMG 22485 / NCIMB 9086 / R18194 / 383).